A 431-amino-acid chain; its full sequence is Adenylosuccinate lyase (431 aa).

N(6)-(1,2-dicarboxyethyl)-AMP-binding positions include 4–5, 67–69, and 93–94; these read RY, RHD, and TS. His141 serves as the catalytic Proton donor/acceptor. Residue Gln212 coordinates N(6)-(1,2-dicarboxyethyl)-AMP. The active-site Proton donor/acceptor is the Ser262. Residues Ser263, 268–270, Asn276, and 307–311 contribute to the N(6)-(1,2-dicarboxyethyl)-AMP site; these read KRN and SAERI.

It belongs to the lyase 1 family. Adenylosuccinate lyase subfamily. Homodimer and homotetramer. Residues from neighboring subunits contribute catalytic and substrate-binding residues to each active site.

The enzyme catalyses N(6)-(1,2-dicarboxyethyl)-AMP = fumarate + AMP. It carries out the reaction (2S)-2-[5-amino-1-(5-phospho-beta-D-ribosyl)imidazole-4-carboxamido]succinate = 5-amino-1-(5-phospho-beta-D-ribosyl)imidazole-4-carboxamide + fumarate. Its pathway is purine metabolism; AMP biosynthesis via de novo pathway; AMP from IMP: step 2/2. The protein operates within purine metabolism; IMP biosynthesis via de novo pathway; 5-amino-1-(5-phospho-D-ribosyl)imidazole-4-carboxamide from 5-amino-1-(5-phospho-D-ribosyl)imidazole-4-carboxylate: step 2/2. Functionally, catalyzes two reactions in de novo purine nucleotide biosynthesis. Catalyzes the breakdown of 5-aminoimidazole- (N-succinylocarboxamide) ribotide (SAICAR or 2-[5-amino-1-(5-phospho-beta-D-ribosyl)imidazole-4-carboxamido]succinate) to 5-aminoimidazole-4-carboxamide ribotide (AICAR or 5-amino-1-(5-phospho-beta-D-ribosyl)imidazole-4-carboxamide) and fumarate, and of adenylosuccinate (ADS or N(6)-(1,2-dicarboxyethyl)-AMP) to adenosine monophosphate (AMP) and fumarate. The polypeptide is Adenylosuccinate lyase (purB) (Staphylococcus haemolyticus (strain JCSC1435)).